Consider the following 453-residue polypeptide: MGSIQTSKDQIHVIIGSTHRFSHLEKAKVIGAHLIKRGYRVTILAGPSVRDEVESIGALFAPMQGRAGGSPIKPAYNQPPPPWAEEMEVSALKNFFIGPIPDEYKSVQDVLKTLRETEGEETKVVYMDDIICGAMLPVYFGAPGAIRPKGVIKIGTTPLPHESAGTPTWTLGIPSPSTDSGSVGDLWGTKKEIYTSDDIQGHFENVLREMGIPADNLKPGSLPRFMHSQGTCCDAYLSLSIPEFEFPRSDAPESIQFVGALPTVGSVPSNLPEWWDEVIHAQGPAKKPIVVVSQGAVNNDPTDLILPTIEALKDEDVAVIATLVRGPKIEVDLPSNVKLAEFIPFDILLRHTDVLVSNGGFGTVQMALSLGVPMVLAGVYLDKYYTNSRAASMGAAINLGCERVEPSVVKTAVCDILSDQKRKERCLQIKEKYAEYNALDKIVDYVDALASKP.

Belongs to the UDP-glycosyltransferase family.

The protein operates within secondary metabolite biosynthesis. UDP-glucosyltransferase; part of the cluster that mediates the biosynthesis of a highly modified cyclo-arginine-tryptophan dipeptide (cRW). The first step of the pathway is perfornmed by the arginine-containing cyclodipeptide synthase (RCPDS) avaA that acts as the scaffold-generating enzyme and is responsible for formation of the cyclo-Arg-Trp (cRW) diketopiperazine. AvaB then acts as a multifunctional flavoenzyme that is responsible for generating the cyclo-Arg-formylkynurenine DKP, which can be deformylated by avaC. AvaB then further catalyzes an additional N-oxidation followed by cyclization and dehydration. The next step is an N-acetylation of the guanidine group catalyzed by the arginine N-acetyltransferase avaD. The roles of the additional enzymes identified within the ava cluster still have to be determined. In Aspergillus versicolor, this protein is UDP-glucosyltransferase avaP.